Here is a 206-residue protein sequence, read N- to C-terminus: Probable N-acetyltransferase 14 (206 aa).

One can recognise an N-acetyltransferase domain in the interval 9 to 206; the sequence is LSVREMREEE…TIVQEFRKDI (198 aa). The next 2 helical transmembrane spans lie at 37-57 and 60-80; these read LILY…ASSG and FILN…IVGL.

The protein belongs to the camello family.

It localises to the membrane. In terms of biological role, probable acetyltransferase. The polypeptide is Probable N-acetyltransferase 14 (nat14) (Xenopus tropicalis (Western clawed frog)).